Consider the following 411-residue polypeptide: LL-diaminopimelate aminotransferase (411 aa).

The substrate site is built by Tyr15 and Gly42. Pyridoxal 5'-phosphate-binding positions include Tyr72, 108 to 109 (SK), Tyr132, Asn187, Tyr218, and 246 to 248 (SFS). Positions 109, 132, and 187 each coordinate substrate. Lys249 is subject to N6-(pyridoxal phosphate)lysine. The pyridoxal 5'-phosphate site is built by Arg257 and Asn292. Asn292 and Arg388 together coordinate substrate.

It belongs to the class-I pyridoxal-phosphate-dependent aminotransferase family. LL-diaminopimelate aminotransferase subfamily. As to quaternary structure, homodimer. The cofactor is pyridoxal 5'-phosphate.

The enzyme catalyses (2S,6S)-2,6-diaminopimelate + 2-oxoglutarate = (S)-2,3,4,5-tetrahydrodipicolinate + L-glutamate + H2O + H(+). It functions in the pathway amino-acid biosynthesis; L-lysine biosynthesis via DAP pathway; LL-2,6-diaminopimelate from (S)-tetrahydrodipicolinate (aminotransferase route): step 1/1. Its function is as follows. Involved in the synthesis of meso-diaminopimelate (m-DAP or DL-DAP), required for both lysine and peptidoglycan biosynthesis. Catalyzes the direct conversion of tetrahydrodipicolinate to LL-diaminopimelate. In Synechococcus elongatus (strain ATCC 33912 / PCC 7942 / FACHB-805) (Anacystis nidulans R2), this protein is LL-diaminopimelate aminotransferase.